We begin with the raw amino-acid sequence, 95 residues long: Mitochondrial import inner membrane translocase subunit Tim13 (95 aa).

A Twin CX3C motif motif is present at residues cysteine 46–cysteine 69. 2 disulfide bridges follow: cysteine 46–cysteine 69 and cysteine 50–cysteine 65.

It belongs to the small Tim family. As to quaternary structure, heterohexamer; composed of 3 copies of TIMM8 (TIMM8A or TIMM8B) and 3 copies of TIMM13, named soluble 70 kDa complex. Associates with the TIM22 complex, whose core is composed of TIMM22.

Its subcellular location is the mitochondrion inner membrane. Mitochondrial intermembrane chaperone that participates in the import and insertion of some multi-pass transmembrane proteins into the mitochondrial inner membrane. Also required for the transfer of beta-barrel precursors from the TOM complex to the sorting and assembly machinery (SAM complex) of the outer membrane. Acts as a chaperone-like protein that protects the hydrophobic precursors from aggregation and guide them through the mitochondrial intermembrane space. The TIMM8-TIMM13 complex mediates the import of some proteins while the predominant TIMM9-TIMM10 70 kDa complex mediates the import of much more proteins. The protein is Mitochondrial import inner membrane translocase subunit Tim13 (timm13) of Danio rerio (Zebrafish).